The chain runs to 390 residues: MVQVVEAFGKPHVNVGTIGHVDHGKTTLTAAITKHYGNFVAYDQIDKAPEERKRGITIATAHVEYQTEKRHYAHVDCPGHADYVKNMIVGAAQMDAAILVVSGVDGPMPQTREHILLAKQVGVGYIVVYINKADVSDPDMIGLVEMEVRELLSKYGFPGDEVPVVIGSALKALEDDDGEYGKKSIDKLMERLDDYVEVPPRSVDLPFLLPIEDVFSISGRGTVVTGRIEKGEIKIGDEIEIIGLKATQKTTCTGVEMFKKLLEKGSAGLNVGILLRGTKREEVERGQVLAKPGTITPHRKFKAEVYILKKEEGGRHTPFFANYQPQFYLRTTDVTGSIKLLEGKEMVMPGDNVSIEVELQVPIAMDKGLRFAIREGGRTVGSGVVSEILE.

One can recognise a tr-type G domain in the interval 10-201; the sequence is KPHVNVGTIG…LDDYVEVPPR (192 aa). The interval 19–26 is G1; the sequence is GHVDHGKT. GTP is bound at residue 19-26; that stretch reads GHVDHGKT. Threonine 26 lines the Mg(2+) pocket. The segment at 55–59 is G2; the sequence is GITIA. Residues 76 to 79 are G3; that stretch reads DCPG. GTP is bound by residues 76-80 and 131-134; these read DCPGH and NKAD. Residues 131–134 are G4; it reads NKAD. The tract at residues 168 to 170 is G5; that stretch reads SAL.

Belongs to the TRAFAC class translation factor GTPase superfamily. Classic translation factor GTPase family. EF-Tu/EF-1A subfamily. In terms of assembly, monomer.

Its subcellular location is the cytoplasm. The enzyme catalyses GTP + H2O = GDP + phosphate + H(+). Functionally, GTP hydrolase that promotes the GTP-dependent binding of aminoacyl-tRNA to the A-site of ribosomes during protein biosynthesis. This is Elongation factor Tu 2 from Wolbachia sp. subsp. Brugia malayi (strain TRS).